A 257-amino-acid polypeptide reads, in one-letter code: Type III pantothenate kinase (257 aa).

An ATP-binding site is contributed by 6 to 13 (DSGNTNTV). Substrate is bound at residue 108 to 111 (GADR). Residue D110 is the Proton acceptor of the active site. D130 is a binding site for K(+). T133 serves as a coordination point for ATP. Residue T185 participates in substrate binding.

This sequence belongs to the type III pantothenate kinase family. Homodimer. The cofactor is NH4(+). It depends on K(+) as a cofactor.

Its subcellular location is the cytoplasm. The catalysed reaction is (R)-pantothenate + ATP = (R)-4'-phosphopantothenate + ADP + H(+). Its pathway is cofactor biosynthesis; coenzyme A biosynthesis; CoA from (R)-pantothenate: step 1/5. Functionally, catalyzes the phosphorylation of pantothenate (Pan), the first step in CoA biosynthesis. The chain is Type III pantothenate kinase from Rhodospirillum rubrum (strain ATCC 11170 / ATH 1.1.1 / DSM 467 / LMG 4362 / NCIMB 8255 / S1).